Here is a 180-residue protein sequence, read N- to C-terminus: uncharacterized protein (180 aa).

This is an uncharacterized protein from Dictyostelium discoideum (Social amoeba).